The primary structure comprises 99 residues: Large ribosomal subunit protein bL28 (99 aa).

Belongs to the bacterial ribosomal protein bL28 family.

The protein is Large ribosomal subunit protein bL28 of Brucella anthropi (strain ATCC 49188 / DSM 6882 / CCUG 24695 / JCM 21032 / LMG 3331 / NBRC 15819 / NCTC 12168 / Alc 37) (Ochrobactrum anthropi).